The primary structure comprises 97 residues: UPF0729 protein GD16342 (97 aa).

The interval 64–97 (KPEKASVGPAEESQNPPLNAIAAETEVDESKKEI) is disordered. Ser-69 bears the Phosphoserine mark.

This sequence belongs to the UPF0729 family.

The polypeptide is UPF0729 protein GD16342 (Drosophila simulans (Fruit fly)).